A 356-amino-acid chain; its full sequence is GDP-mannose:di-myo-inositol-1,3'-phosphate beta-1,2-mannosyltransferase (356 aa).

It belongs to the MDIP synthase family. Mg(2+) is required as a cofactor.

The catalysed reaction is bis(myo-inositol) 1,3'-phosphate + GDP-alpha-D-mannose = 2-O-(beta-D-mannosyl)-bis(myo-inositol) 1,3'-phosphate + GDP + H(+). It catalyses the reaction 2-O-(beta-D-mannosyl)-bis(myo-inositol) 1,3'-phosphate + GDP-alpha-D-mannose = 2-O-(beta-D-mannosyl-(1-&gt;2)-beta-D-mannosyl)-bis(myo-inositol) 1,3'-phosphate + GDP + H(+). It carries out the reaction bis(myo-inositol) 1,3'-phosphate + 2 GDP-alpha-D-mannose = 2-O-(beta-D-mannosyl-(1-&gt;2)-beta-D-mannosyl)-bis(myo-inositol) 1,3'-phosphate + 2 GDP + 2 H(+). In terms of biological role, catalyzes the transfer of the mannosyl group from GDP-mannose to di-myo-inositol-1,3'-phosphate (DIP), producing mannosyl-di-myo-inositol phosphate (MDIP). Can also use MDIP as an acceptor of a second mannose residue, yielding di-mannosyl-di-myo-inositol phosphate (MMDIP). This Aquifex aeolicus (strain VF5) protein is GDP-mannose:di-myo-inositol-1,3'-phosphate beta-1,2-mannosyltransferase.